A 1063-amino-acid polypeptide reads, in one-letter code: Structural polyprotein (1063 aa).

A disordered region spans residues M1 to A131. The segment covering A18 to S34 has biased composition (low complexity). Residues G30–G69 form a human C1QBP/SF2P32-binding region. A Phosphoserine; by host modification is found at S46. The span at P59 to G69 shows a compositional bias: basic residues. Basic and acidic residues predominate over residues Q70–S87. The span at A93–P107 shows a compositional bias: pro residues. The cysteines at positions 153 and 197 are disulfide-linked. Residues G279 to A300 are functions as E2 signal peptide. Topologically, residues G301 to S534 are extracellular. 4 N-linked (GlcNAc...) asparagine; by host glycosylation sites follow: N353, N371, N410, and N429. Residues L535–C555 traverse the membrane as a helical segment. Over R556 to G582 the chain is Cytoplasmic. A functions as E1 signal peptide region spans residues G563 to G582. The Extracellular segment spans residues E583–H1028. 8 disulfide bridges follow: C590–C595, C619–C824, C641–C653, C699–C712, C758–C767, C807–C817, C931–C934, and C950–C983. N-linked (GlcNAc...) asparagine; by host glycosylation occurs at N658. Positions 670 and 671 each coordinate Ca(2+). Ca(2+) is bound by residues D718 and T719. 2 N-linked (GlcNAc...) asparagine; by host glycosylation sites follow: N759 and N791. T1011 and T1012 each carry an O-linked (GalNAc...) threonine; by host glycan. A helical membrane pass occupies residues W1029–C1049. At A1050–R1063 the chain is on the cytoplasmic side.

As to quaternary structure, homodimer; further assembles into homooligomer. Interacts with human C1QBP. Interacts (via N-terminus) with protease/methyltransferase p150. In terms of assembly, heterodimer with spike glycoprotein E2. Heterodimer with spike glycoprotein E1. Structural polyprotein: Specific enzymatic cleavages in vivo yield mature proteins. Two signal peptidase-mediated cleavages within the polyprotein produce the structural proteins capsid, E2, and E1. The E2 signal peptide remains attached to the C-terminus of the capsid protein after cleavage by the signal peptidase. Another signal peptide at E2 C-terminus directs E1 to the ER, with a similar mechanism. Post-translationally, contains three N-linked oligosaccharides. In terms of processing, capsid is phosphorylated on Ser-46 by host. This phosphorylation negatively regulates capsid protein RNA-binding activity. Dephosphorylated by human PP1A.

It is found in the virion. The protein localises to the host cytoplasm. Its subcellular location is the host mitochondrion. The protein resides in the virion membrane. It localises to the host Golgi apparatus membrane. Functionally, capsid protein interacts with genomic RNA and assembles into icosahedric core particles 65-70 nm in diameter. The resulting nucleocapsid eventually associates with the cytoplasmic domain of E2 at the cell membrane, leading to budding and formation of mature virions from host Golgi membranes. Phosphorylation negatively regulates RNA-binding activity, possibly delaying virion assembly during the viral replication phase. Capsid protein dimerizes and becomes disulfide-linked in the virion. Modulates genomic RNA replication. Modulates subgenomic RNA synthesis by interacting with human C1QBP/SF2P32. Induces both perinuclear clustering of mitochondria and the formation of electron-dense intermitochondrial plaques, both hallmarks of rubella virus infected cells. Induces apoptosis when expressed in transfected cells. Responsible for viral attachment to target host cell, by binding to the cell receptor. Its transport to the plasma membrane depends on interaction with E1 protein. The surface glycoproteins display an irregular helical organization and a pseudo-tetrameric inner nucleocapsid arrangement. In terms of biological role, class II viral fusion protein. Fusion activity is inactive as long as E1 is bound to E2 in mature virion. After virus attachment to target cell and clathrin-mediated endocytosis, acidification of the endosome would induce dissociation of E1/E2 heterodimer and concomitant trimerization of the E1 subunits. This E1 homotrimer is fusion active, and promotes release of viral nucleocapsid in cytoplasm after endosome and viral membrane fusion. The cytoplasmic tail of spike glycoprotein E1 modulates virus release. The surface glycoproteins display an irregular helical organization and a pseudo-tetrameric inner nucleocapsid arrangement. The sequence is that of Structural polyprotein from Homo sapiens (Human).